Reading from the N-terminus, the 731-residue chain is Cell death abnormality protein 12 (731 aa).

Residues 339 to 485 form the ELMO domain; it reads AEVQKILDIE…VVLEQLRHVL (147 aa). The region spanning 544-679 is the PH domain; that stretch reads VRINHLNYLK…WLEGLAELIG (136 aa). The short motif at 715-718 is the SH3-binding element; sequence PEIP.

Interacts with psr-1. Forms a ternary complex with ced-2 and ced-5.

It localises to the cytoplasm. In terms of biological role, involved in programmed apoptosis and necrosis. Required for the cell corpse engulfment process. Has roles in the formation of actin halos and distal tip cell migration. Negatively regulates the unc-6/Netrin receptor unc-5 to control distal tip cell migration along the anterior-posterior axis of the body. Plays no role in amphid axon outgrowth. The protein is Cell death abnormality protein 12 of Caenorhabditis elegans.